Reading from the N-terminus, the 255-residue chain is UPF0246 protein CC_3385 (255 aa).

The protein belongs to the UPF0246 family.

The chain is UPF0246 protein CC_3385 from Caulobacter vibrioides (strain ATCC 19089 / CIP 103742 / CB 15) (Caulobacter crescentus).